The chain runs to 233 residues: Type IV secretion system protein PtlE homolog (233 aa).

The chain crosses the membrane as a helical span at residues 42-62 (VAWAALAVTALSLIAIATMLP).

Belongs to the virB8 family.

It is found in the cell inner membrane. The chain is Type IV secretion system protein PtlE homolog (ptlE) from Bordetella bronchiseptica (strain ATCC BAA-588 / NCTC 13252 / RB50) (Alcaligenes bronchisepticus).